We begin with the raw amino-acid sequence, 350 residues long: L-threonine 3-dehydrogenase (350 aa).

Cysteine 42 serves as a coordination point for Zn(2+). Catalysis depends on charge relay system residues threonine 44 and histidine 47. Zn(2+) contacts are provided by histidine 67, glutamate 68, cysteine 97, cysteine 100, cysteine 103, and cysteine 111. Residues leucine 179, glutamate 199, arginine 204, 266 to 268 (LGL), and 291 to 292 (IT) each bind NAD(+).

This sequence belongs to the zinc-containing alcohol dehydrogenase family. Homotetramer. Requires Zn(2+) as cofactor.

The protein localises to the cytoplasm. The catalysed reaction is L-threonine + NAD(+) = (2S)-2-amino-3-oxobutanoate + NADH + H(+). The protein operates within amino-acid degradation; L-threonine degradation via oxydo-reductase pathway; glycine from L-threonine: step 1/2. In terms of biological role, catalyzes the NAD(+)-dependent oxidation of L-threonine to 2-amino-3-ketobutyrate. To a lesser extent, also catalyzes the oxidation of L-serine. The protein is L-threonine 3-dehydrogenase of Thermococcus kodakarensis (strain ATCC BAA-918 / JCM 12380 / KOD1) (Pyrococcus kodakaraensis (strain KOD1)).